We begin with the raw amino-acid sequence, 146 residues long: Oleosin (146 aa).

Residue Ala2 is modified to N-acetylalanine. 3 helical membrane-spanning segments follow: residues 22–42, 56–76, and 77–97; these read ILGF…TGLT, VLIF…VAVA, and GFLS…WLYN. A Proline-knot motif is present at residues 55-66; it reads PVLIFFSPILIP.

This sequence belongs to the oleosin family. Expressed in pollen (at protein level).

The protein localises to the lipid droplet. It localises to the membrane. The protein is Oleosin of Pinus elliottii (Slash pine).